The following is a 182-amino-acid chain: Putative colanic acid biosynthesis acetyltransferase WcaF (182 aa).

Belongs to the transferase hexapeptide repeat family.

The protein operates within slime biogenesis; slime polysaccharide biosynthesis. The protein is Putative colanic acid biosynthesis acetyltransferase WcaF (wcaF) of Shigella flexneri.